The following is a 311-amino-acid chain: Homeobox-leucine zipper protein HOX1 (311 aa).

2 disordered regions span residues 29 to 69 (AGGA…SDHR) and 97 to 160 (AETT…KKLR). The span at 119 to 145 (SSPNSTLSSLSGKRGAPSAATAAAAAA) shows a compositional bias: low complexity. Positions 154-213 (GSRKKLRLSKDQAAVLEDTFKEHNTLNPKQKAALARQLNLKPRQVEVWFQNRRARTKLKQ) form a DNA-binding region, homeobox. A leucine-zipper region spans residues 212 to 256 (KQTEVDCELLKRCCETLTDENRRLHRELQELRALKLATAAAAPHH). Positions 279–311 (SAATTTRNNSGAAPARPVPTRPWPPAAAQRSSA) are disordered. Residues 280–289 (AATTTRNNSG) show a composition bias toward polar residues. Over residues 294-303 (RPVPTRPWPP) the composition is skewed to pro residues.

This sequence belongs to the HD-ZIP homeobox family. Class II subfamily. Homodimer. May form a heterodimer with HOX2, HOX3 or HOX7. Expressed in root provascular and vascular cylinder, provascular and vascular strands of leaves, provascular and vascular strands of the whole panicle, in mature embryo provascular bundles of scutellum and embryonic axis and provascular and vascular strands of young immature spikelet organs. Expressed in differentiating and differentiated xylem and phloem elements, and in outer and inner bundle sheath cells of all vascular bundles. Expressed in auricles, ligules, culm, guard cells brac hairs and pollen.

Its subcellular location is the nucleus. Its function is as follows. Probable transcription repressor involved leaf development. Binds to the DNA sequence 5'-CAAT[GC]ATTG-3'. May act as a regulatory switch to specify provascular cell fate. The sequence is that of Homeobox-leucine zipper protein HOX1 (HOX1) from Oryza sativa subsp. japonica (Rice).